Reading from the N-terminus, the 189-residue chain is Interferon alpha-D (189 aa).

Positions M1 to G23 are cleaved as a signal peptide. 2 disulfide bridges follow: C24-C122 and C52-C162.

It belongs to the alpha/beta interferon family.

It localises to the secreted. Functionally, produced by macrophages, IFN-alpha have antiviral activities. Interferon stimulates the production of two enzymes: a protein kinase and an oligoadenylate synthetase. The protein is Interferon alpha-D (IFNAD) of Bos taurus (Bovine).